We begin with the raw amino-acid sequence, 231 residues long: Probable transaldolase (231 aa).

K83 serves as the catalytic Schiff-base intermediate with substrate.

It belongs to the transaldolase family. Type 3B subfamily.

The protein resides in the cytoplasm. It carries out the reaction D-sedoheptulose 7-phosphate + D-glyceraldehyde 3-phosphate = D-erythrose 4-phosphate + beta-D-fructose 6-phosphate. The protein operates within carbohydrate degradation; pentose phosphate pathway; D-glyceraldehyde 3-phosphate and beta-D-fructose 6-phosphate from D-ribose 5-phosphate and D-xylulose 5-phosphate (non-oxidative stage): step 2/3. Its function is as follows. Transaldolase is important for the balance of metabolites in the pentose-phosphate pathway. This is Probable transaldolase from Rhodospirillum centenum (strain ATCC 51521 / SW).